The chain runs to 267 residues: Soluble interferon gamma receptor OPG193 (267 aa).

Residues methionine 1 to alanine 17 form the signal peptide. Asparagine 42 and asparagine 150 each carry an N-linked (GlcNAc...) asparagine; by host glycan.

Belongs to the type II cytokine receptor family. As to quaternary structure, homodimer. Interacts with host IFNG.

Its subcellular location is the secreted. Functionally, counteracts the antiviral effects of host IFN-gamma. Acts as a soluble IFN-gamma receptor and thus inhibits the interaction between host IFN-gamma and its receptor. In Cynomys gunnisoni (Gunnison's prairie dog), this protein is Soluble interferon gamma receptor OPG193 (OPG193).